Here is a 356-residue protein sequence, read N- to C-terminus: Nicotinate-nucleotide--dimethylbenzimidazole phosphoribosyltransferase (356 aa).

E317 acts as the Proton acceptor in catalysis.

Belongs to the CobT family. As to quaternary structure, homodimer.

The catalysed reaction is 5,6-dimethylbenzimidazole + nicotinate beta-D-ribonucleotide = alpha-ribazole 5'-phosphate + nicotinate + H(+). Its pathway is nucleoside biosynthesis; alpha-ribazole biosynthesis; alpha-ribazole from 5,6-dimethylbenzimidazole: step 1/2. Its function is as follows. Catalyzes the synthesis of alpha-ribazole-5'-phosphate from nicotinate mononucleotide (NAMN) and 5,6-dimethylbenzimidazole (DMB). In Salmonella paratyphi A (strain AKU_12601), this protein is Nicotinate-nucleotide--dimethylbenzimidazole phosphoribosyltransferase.